A 387-amino-acid chain; its full sequence is Type 2 DNA topoisomerase 6 subunit A (387 aa).

The Topo IIA-type catalytic domain occupies 12-160 (EARKKALAVF…MLILSKEKGK (149 aa)). Catalysis depends on Y106, which acts as the O-(5'-phospho-DNA)-tyrosine intermediate. 2 residues coordinate Mg(2+): E207 and D259.

This sequence belongs to the TOP6A family. Homodimer. Heterotetramer of two Top6A and two Top6B chains. Mg(2+) serves as cofactor.

It catalyses the reaction ATP-dependent breakage, passage and rejoining of double-stranded DNA.. Functionally, relaxes both positive and negative superturns and exhibits a strong decatenase activity. In Hyperthermus butylicus (strain DSM 5456 / JCM 9403 / PLM1-5), this protein is Type 2 DNA topoisomerase 6 subunit A.